The following is a 447-amino-acid chain: UPF0210 protein OEOE_0945 (447 aa).

This sequence belongs to the UPF0210 family. As to quaternary structure, homodimer.

The polypeptide is UPF0210 protein OEOE_0945 (Oenococcus oeni (strain ATCC BAA-331 / PSU-1)).